A 356-amino-acid polypeptide reads, in one-letter code: MVPPTAVAEANAVATKDPVKDTILTPRFYTTDFDDMAAMDLRPNEAELEAICEEFRKDYNRHHFVRNDDFDGAADKLDPETRRVFVEFLEQSCTSEFSGFLLYKELSRRIKQQNPLLAECFAHMARDEARHAGFLNKAMSDFGMQLDLGFLTANKDYTFFQPKFIFYATYLSEKIGYWRYIAIYRHLEKNPESKIFPIFNFFENWCQDENRHGDFFDALMKSQPDTVRGPIAKLWCRFFLLAVFATMYVRDVARKEFYEALGLDARTYDKMVIEKTNETTARVFPVVLDVNNPKFWTRLERLVENNAALEAADRSSSPAPLKLFKKLPRWISNGAEMAKLFLMSPIDSAKFQPAVR.

It belongs to the AcsF family. The cofactor is Fe cation.

It catalyses the reaction Mg-protoporphyrin IX 13-monomethyl ester + 3 NADPH + 3 O2 + 2 H(+) = 3,8-divinyl protochlorophyllide a + 3 NADP(+) + 5 H2O. The protein operates within porphyrin-containing compound metabolism; chlorophyll biosynthesis (light-independent). Catalyzes the formation of the isocyclic ring in chlorophyll biosynthesis. Mediates the cyclase reaction, which results in the formation of divinylprotochlorophyllide (Pchlide) characteristic of all chlorophylls from magnesium-protoporphyrin IX 13-monomethyl ester (MgPMME). In Parasynechococcus marenigrum (strain WH8102), this protein is Magnesium-protoporphyrin IX monomethyl ester [oxidative] cyclase.